The following is a 268-amino-acid chain: LOB domain-containing protein 22 (268 aa).

Positions 1-31 are disordered; that stretch reads MPSGKPSSVFPLHPKPTPLKPSSSTSSSNNN. Over residues 22-31 the composition is skewed to low complexity; it reads SSSTSSSNNN. The LOB domain occupies 35 to 136; the sequence is QACAACKYQR…NELEIVLQQL (102 aa).

It belongs to the LOB domain-containing protein family.

This chain is LOB domain-containing protein 22 (LBD22), found in Arabidopsis thaliana (Mouse-ear cress).